The primary structure comprises 337 residues: Putative carbonic anhydrase-like protein 2 (337 aa).

A signal peptide spans M1–G16. One can recognise an Alpha-carbonic anhydrase domain in the interval P17–I274. Y140 is a catalytic residue. N-linked (GlcNAc...) asparagine glycosylation is present at N188. T212–F213 provides a ligand contact to substrate.

It belongs to the alpha-carbonic anhydrase family.

The protein localises to the secreted. The chain is Putative carbonic anhydrase-like protein 2 (cah-2) from Caenorhabditis elegans.